Reading from the N-terminus, the 299-residue chain is Probable lipid kinase YegS-like (299 aa).

The region spanning 2–133 is the DAGKc domain; that stretch reads ATFPASLLIL…IDIAQVNDKT (132 aa). Residues Thr40, 66 to 72, and Thr95 contribute to the ATP site; that span reads GDGTINE. Mg(2+)-binding residues include Leu215, Asp218, and Leu220. Glu271 serves as the catalytic Proton acceptor.

Belongs to the diacylglycerol/lipid kinase family. YegS lipid kinase subfamily. Mg(2+) is required as a cofactor. The cofactor is Ca(2+).

The protein resides in the cytoplasm. Functionally, probably phosphorylates lipids; the in vivo substrate is unknown. This is Probable lipid kinase YegS-like from Citrobacter koseri (strain ATCC BAA-895 / CDC 4225-83 / SGSC4696).